We begin with the raw amino-acid sequence, 239 residues long: Glucosamine-6-phosphate deaminase (239 aa).

Residue D62 is the Proton acceptor; for enolization step of the active site. N128 serves as the catalytic For ring-opening step. H130 serves as the catalytic Proton acceptor; for ring-opening step. E135 functions as the For ring-opening step in the catalytic mechanism.

This sequence belongs to the glucosamine/galactosamine-6-phosphate isomerase family. NagB subfamily.

It catalyses the reaction alpha-D-glucosamine 6-phosphate + H2O = beta-D-fructose 6-phosphate + NH4(+). It functions in the pathway amino-sugar metabolism; N-acetylneuraminate degradation; D-fructose 6-phosphate from N-acetylneuraminate: step 5/5. Catalyzes the reversible isomerization-deamination of glucosamine 6-phosphate (GlcN6P) to form fructose 6-phosphate (Fru6P) and ammonium ion. The polypeptide is Glucosamine-6-phosphate deaminase (Lactobacillus johnsonii (strain CNCM I-12250 / La1 / NCC 533)).